The primary structure comprises 370 residues: 1-propanol dehydrogenase PduQ (370 aa).

This sequence belongs to the iron-containing alcohol dehydrogenase family. As to quaternary structure, interacts with PduP, probably via the N-terminus of PduQ. Fe cation is required as a cofactor.

It localises to the bacterial microcompartment. It catalyses the reaction 1-propanol + NAD(+) = propanal + NADH + H(+). Its pathway is polyol metabolism; 1,2-propanediol degradation. Enzyme is oxygen sensitive. Its function is as follows. An iron-dependent alcohol dehydrogenase required for optimal 1,2-propanediol (1,2-PD) degradation. NAD(+) and NADH are regenerated internally within the bacterial microcompartment (BMC) dedicated to 1,2-PD degradation by the PduP and PduQ enzymes, which reduce NAD(+) and oxidize NADH respectively, although there must also be cofactor transport across the BMC. In terms of biological role, the 1,2-PD-specific bacterial microcompartment (BMC) concentrates low levels of 1,2-PD catabolic enzymes, concentrates volatile reaction intermediates thus enhancing pathway flux and keeps the level of toxic, mutagenic propionaldehyde low. This Salmonella typhimurium (strain LT2 / SGSC1412 / ATCC 700720) protein is 1-propanol dehydrogenase PduQ.